Consider the following 362-residue polypeptide: Cell death regulator Aven (362 aa).

Disordered stretches follow at residues 1–111 (MQAE…NYSK), 214–237 (VKPK…GPGG), and 253–362 (VLLG…SMIS). Positions 8-17 (RGGRGRRPGR) are enriched in basic residues. Gly residues predominate over residues 37 to 47 (RGGGGGGGGDG). Residues 50 to 60 (RRGRGRGRGFR) are compositionally biased toward basic residues. The span at 61 to 72 (GARGGRGGGGAP) shows a compositional bias: gly residues. Acidic residues predominate over residues 90 to 105 (VEDDSDAETYGEENDE). Phosphoserine is present on Ser94. Residue Lys230 is modified to N6-methyllysine. Residues 350-362 (EEELEDWLDSMIS) are compositionally biased toward acidic residues.

In terms of assembly, binds Apaf-1, BCL-2 and BAD (Bcl-xl). In terms of tissue distribution, highly expressed in testis, ovary, thymus, prostate, spleen, small intestine, colon, heart, skeletal muscle, liver, kidney and pancreas.

It localises to the endomembrane system. Functionally, protects against apoptosis mediated by Apaf-1. This Homo sapiens (Human) protein is Cell death regulator Aven (AVEN).